Consider the following 120-residue polypeptide: uncharacterized protein (120 aa).

Positions 90-120 are disordered; the sequence is SLASRGGHMTQSGQCHVSGSLLGRGHKSRGR.

This is an uncharacterized protein from Homo sapiens (Human).